Consider the following 256-residue polypeptide: Pimeloyl-[acyl-carrier protein] methyl ester esterase (256 aa).

Residues 15-242 form the AB hydrolase-1 domain; that stretch reads HLVLLHGWGL…AAHAPFISHP (228 aa). Residues Trp-22, 82–83, and 143–147 each bind substrate; these read SL and FLALQ. Ser-82 acts as the Nucleophile in catalysis. Active-site residues include Asp-207 and His-235. Position 235 (His-235) interacts with substrate.

The protein belongs to the AB hydrolase superfamily. Carboxylesterase BioH family. In terms of assembly, monomer.

The protein localises to the cytoplasm. The catalysed reaction is 6-carboxyhexanoyl-[ACP] methyl ester + H2O = 6-carboxyhexanoyl-[ACP] + methanol + H(+). Its pathway is cofactor biosynthesis; biotin biosynthesis. Functionally, the physiological role of BioH is to remove the methyl group introduced by BioC when the pimeloyl moiety is complete. It allows to synthesize pimeloyl-ACP via the fatty acid synthetic pathway through the hydrolysis of the ester bonds of pimeloyl-ACP esters. This is Pimeloyl-[acyl-carrier protein] methyl ester esterase from Escherichia coli O127:H6 (strain E2348/69 / EPEC).